The following is a 150-amino-acid chain: Ribosome maturation factor RimP (150 aa).

Belongs to the RimP family.

The protein localises to the cytoplasm. Functionally, required for maturation of 30S ribosomal subunits. The protein is Ribosome maturation factor RimP of Methylococcus capsulatus (strain ATCC 33009 / NCIMB 11132 / Bath).